The primary structure comprises 497 residues: Angiopoietin-1 (497 aa).

An N-terminal signal peptide occupies residues 1-19; the sequence is MTVFLSFAFFAAILTHIGC. The stretch at 81–119 forms a coiled coil; it reads QKLQHLEHVMENYTQWLQKLENYIVENMKSEMAQIQQNA. 5 N-linked (GlcNAc...) asparagine glycosylation sites follow: Asn-92, Asn-122, Asn-154, Asn-243, and Asn-294. Residues 153–261 are a coiled coil; that stretch reads LNQTSRLEIQ…LELMDTVHNL (109 aa). The region spanning 276-496 is the Fibrinogen C-terminal domain; sequence REEEKPFRDC…STTMMIRPLD (221 aa). 2 cysteine pairs are disulfide-bonded: Cys-285/Cys-314 and Cys-438/Cys-451.

As to quaternary structure, homooligomer. Interacts with TEK/TIE2. Interacts with SVEP1/polydom. Interacts with THBD; this interaction significantly inhibits the generation of activated PC and TAFIa/CPB2 by the thrombin/thrombomodulin complex.

Its subcellular location is the secreted. Binds and activates TIE2 receptor by inducing its tyrosine phosphorylation. Implicated in endothelial developmental processes later and distinct from that of VEGF. Appears to play a crucial role in mediating reciprocal interactions between the endothelium and surrounding matrix and mesenchyme. Mediates blood vessel maturation/stability. It may play an important role in the heart early development. The polypeptide is Angiopoietin-1 (Angpt1) (Rattus norvegicus (Rat)).